The chain runs to 805 residues: Mediator of RNA polymerase II transcription subunit 25 (805 aa).

Disordered regions lie at residues 430–455 (GSAQNTQNSAPSSFTSTAPSMSGQTV) and 786–805 (SQSQGSSQGLPITPGGGFMN). Composition is skewed to low complexity over residues 438–451 (SAPSSFTSTAPSMS) and 786–795 (SQSQGSSQGL).

Belongs to the Mediator complex subunit 25 family. Interacts with MYC2 (via N-terminus). MED25 competes with JAZ7 for binding to MYC2.

Its function is as follows. Component of the Mediator complex, a coactivator involved in the regulated transcription of nearly all RNA polymerase II-dependent genes. Mediator functions as a bridge to convey information from gene-specific regulatory proteins to the basal RNA polymerase II transcription machinery. Mediator is recruited to promoters by direct interactions with regulatory proteins and serves as a scaffold for the assembly of a functional pre-initiation complex with RNA polymerase II and the general transcription factors. Plays a positive role in wound-induced activation of jasmonate-responsive genes whose promoters are targeted by MYC2. The protein is Mediator of RNA polymerase II transcription subunit 25 of Solanum lycopersicum (Tomato).